The sequence spans 492 residues: Zn(2)-C6 fungal-type transcription factor (492 aa).

Positions Cys-14–Cys-41 form a DNA-binding region, zn(2)-C6 fungal-type. The tract at residues Thr-58–Thr-119 is disordered. The span at Ser-78–Arg-95 shows a compositional bias: low complexity. The residue at position 82 (Thr-82) is a Phosphothreonine. 2 positions are modified to phosphoserine: Ser-92 and Ser-102. The segment covering Val-107–Thr-119 has biased composition (polar residues). At Thr-217 the chain carries Phosphothreonine. Ser-305 is modified (phosphoserine).

As to quaternary structure, interacts with HOG1. In terms of processing, phosphorylation at Thr-82, Ser-92, Ser-102, thr-117 and ser-305 by HOG1 is required for regulating expression of ergosterol biosynthesis genes.

Its subcellular location is the nucleus. Its function is as follows. Transcription factor that targets gene promoters containing 2 conserved CGAA repeat sequences. Positively regulates the expression of ergosterol biosynthesis genes including CYP51A and CYP51B encoding the sterol 14-alpha demethylase, and ERG6A and ERG6B encoding the sterol 24-C-methyltransferase. The polypeptide is Zn(2)-C6 fungal-type transcription factor (Gibberella zeae (strain ATCC MYA-4620 / CBS 123657 / FGSC 9075 / NRRL 31084 / PH-1) (Wheat head blight fungus)).